The following is a 202-amino-acid chain: MGIRKPALSVGEARRLAAARPEIVHPSLPVATQNSTLPQPPENLDEEDRRPAPATAKRCHSSDQQSMLTVDALSSTTAPEKIQVFLSARPPAPEVSKIYDNLILQYSPSKSLQMILRRALGDFENMLADGSFRAAPKSYPIPHTAFEKSIIVQTSRMFPVSLIEAARNHFDPLGLETARAFGHKLATAALACFFAREKATNS.

The tract at residues 21–66 (PEIVHPSLPVATQNSTLPQPPENLDEEDRRPAPATAKRCHSSDQQS) is disordered.

The chain is Protein virC2 (virC2) from Agrobacterium fabrum (strain C58 / ATCC 33970) (Agrobacterium tumefaciens (strain C58)).